A 360-amino-acid chain; its full sequence is Mannan endo-1,4-beta-mannosidase (360 aa).

Residues 1-24 (MLKKLAVCLSIVLLLLGAASPISA) form the signal peptide. Positions 36–347 (QTTKDIMNWL…YQNSWTLNKG (312 aa)) constitute a GH26 domain. His-129 is a binding site for substrate. Residue Glu-191 is the Proton donor of the active site. Substrate-binding residues include Trp-196 and Tyr-266. Glu-290 functions as the Nucleophile in the catalytic mechanism.

This sequence belongs to the glycosyl hydrolase 26 family. As to quaternary structure, homodimer.

The protein localises to the secreted. The enzyme catalyses Random hydrolysis of (1-&gt;4)-beta-D-mannosidic linkages in mannans, galactomannans and glucomannans.. Involved in the degradation of glucomannan. Catalyzes the endo hydrolysis of beta-1,4-linked mannan, galactomannan and glucomannan. The polypeptide is Mannan endo-1,4-beta-mannosidase (Bacillus subtilis).